Here is a 346-residue protein sequence, read N- to C-terminus: Peroxidase 9 (346 aa).

Residues 1–23 form the signal peptide; it reads MAISKLIPTLVLFVLFSFDVSVA. 4 disulfide bridges follow: Cys-54–Cys-134, Cys-87–Cys-92, Cys-140–Cys-342, and Cys-219–Cys-251. The Proton acceptor role is filled by His-85. Ca(2+) is bound by residues Asp-86, Val-89, Gly-91, Asp-93, and Ser-95. Residue Pro-182 participates in substrate binding. Asn-185 is a glycosylation site (N-linked (GlcNAc...) asparagine). Position 212 (His-212) interacts with heme b. Thr-213 contacts Ca(2+). 3 residues coordinate Ca(2+): Asp-264, Ser-267, and Asp-272.

It belongs to the peroxidase family. Classical plant (class III) peroxidase subfamily. Heme b is required as a cofactor. The cofactor is Ca(2+).

The protein resides in the secreted. The enzyme catalyses 2 a phenolic donor + H2O2 = 2 a phenolic radical donor + 2 H2O. Functionally, removal of H(2)O(2), oxidation of toxic reductants, biosynthesis and degradation of lignin, suberization, auxin catabolism, response to environmental stresses such as wounding, pathogen attack and oxidative stress. These functions might be dependent on each isozyme/isoform in each plant tissue. The protein is Peroxidase 9 (PER9) of Arabidopsis thaliana (Mouse-ear cress).